Here is a 445-residue protein sequence, read N- to C-terminus: Adenylosuccinate synthetase (445 aa).

Residues 24-30 and 52-54 each bind GTP; these read GDEGKGK and GHT. Residue Asp-25 is the Proton acceptor of the active site. Residues Asp-25 and Gly-52 each coordinate Mg(2+). Residues 25–28, 50–53, Thr-147, Arg-161, Asn-238, Thr-253, and Arg-317 each bind IMP; these read DEGK and NAGH. His-53 serves as the catalytic Proton donor. 313–319 contacts substrate; it reads TTTGRRR. GTP contacts are provided by residues Arg-319, 345-347, and 427-429; these read KLD and GVG.

The protein belongs to the adenylosuccinate synthetase family. As to quaternary structure, homodimer. Mg(2+) is required as a cofactor.

The protein resides in the cytoplasm. It catalyses the reaction IMP + L-aspartate + GTP = N(6)-(1,2-dicarboxyethyl)-AMP + GDP + phosphate + 2 H(+). Its pathway is purine metabolism; AMP biosynthesis via de novo pathway; AMP from IMP: step 1/2. Functionally, plays an important role in the de novo pathway and in the salvage pathway of purine nucleotide biosynthesis. Catalyzes the first committed step in the biosynthesis of AMP from IMP. This Malassezia globosa (strain ATCC MYA-4612 / CBS 7966) (Dandruff-associated fungus) protein is Adenylosuccinate synthetase.